The sequence spans 356 residues: Testis-expressed protein 19.1 (356 aa).

Positions 1–78 (MCPPVSVRHG…WDAEPMEHLS (78 aa)) are interaction with LIRE1. Positions 59-72 (LSEEEEEEEVWDAE) are enriched in acidic residues. A disordered region spans residues 59-107 (LSEEEEEEEVWDAEPMEHLSESESLESDSKQDAGSEQDAGSEPNTRSEQ). A compositionally biased stretch (basic and acidic residues) spans 73-91 (PMEHLSESESLESDSKQDA). The interval 139–186 (QWVVFSISVPTELLPQEAVPLDLGPEDVEWTQALPWRLDVLFPCSHRL) is important for interaction with piRNA.

As to quaternary structure, interacts with UBR2; does not lead to Tex19.1 degradation and stabilizes it. Interacts with piRNA-associated proteins DDX4, EDC4, MAEL, PIWIL1, PIWIL2, RANBP9 and TDRD6. Interacts with L1RE1.

It is found in the cytoplasm. Required during spermatogenesis and placenta development, participating in the repression of retrotransposable elements and prevent their mobilization. Collaborates with the Piwi-interacting RNA (piRNA) pathway, which mediates the repression of transposable elements during meiosis by forming complexes composed of piRNAs and Piwi proteins. Interacts with Piwi proteins and directly binds piRNAs, a class of 24 to 30 nucleotide RNAs that are generated by a Dicer-independent mechanism and are primarily derived from transposons and other repeated sequence elements. Also during spermatogenesis, promotes, with UBR2, SPO11-dependent recombination foci to accumulate and drive robust homologous chromosome synapsis. Interacts with LINE-1 retrotransposon encoded LIRE1, stimulates LIRE1 polyubiquitination, mediated by UBR2, and degradation, inhibiting LINE-1 retrotransposon mobilization. This Rattus norvegicus (Rat) protein is Testis-expressed protein 19.1 (Tex19.1).